The primary structure comprises 156 residues: Snaclec A12 (156 aa).

The N-terminal stretch at 1 to 23 is a signal peptide; that stretch reads MGRSISVSFGLLVVFLSLSGTGA. Intrachain disulfides connect Cys-27–Cys-38, Cys-55–Cys-148, and Cys-123–Cys-140. Residues 34–149 enclose the C-type lectin domain; the sequence is YEGHCYKVFN…CELAYHFICM (116 aa).

This sequence belongs to the snaclec family. Heterodimer; disulfide-linked. As to expression, expressed by the venom gland.

It localises to the secreted. Its function is as follows. Interferes with one step of hemostasis (modulation of platelet aggregation, or coagulation cascade, for example). The protein is Snaclec A12 of Macrovipera lebetinus (Levantine viper).